The sequence spans 23 residues: Alyteserin-1b (23 aa).

Asn23 is modified (asparagine amide).

As to expression, expressed by the skin glands.

It localises to the secreted. It is found in the target cell membrane. Antibacterial peptide with amphipathic alpha-helical structure. Shows selective growth inhibitory activity against the Gram-negative bacteria E.coli (MIC=25 uM). Has a weak hemolytic activity against human erythrocytes (LC(50)=200 uM). Is not active against S.aureus (MIC=200 uM). The polypeptide is Alyteserin-1b (Alytes obstetricans (Common midwife toad)).